Consider the following 268-residue polypeptide: Thymidylate synthase (268 aa).

Residues Arg-26 and 131–132 contribute to the dUMP site; that span reads RR. The active-site Nucleophile is the Cys-151. DUMP is bound by residues 171-174, Asn-182, and 212-214; these read RSAD and HIY. Asp-174 is a binding site for (6R)-5,10-methylene-5,6,7,8-tetrahydrofolate. (6R)-5,10-methylene-5,6,7,8-tetrahydrofolate is bound at residue Ser-267.

This sequence belongs to the thymidylate synthase family. Bacterial-type ThyA subfamily. Homodimer.

It is found in the cytoplasm. It catalyses the reaction dUMP + (6R)-5,10-methylene-5,6,7,8-tetrahydrofolate = 7,8-dihydrofolate + dTMP. It participates in pyrimidine metabolism; dTTP biosynthesis. Catalyzes the reductive methylation of 2'-deoxyuridine-5'-monophosphate (dUMP) to 2'-deoxythymidine-5'-monophosphate (dTMP) while utilizing 5,10-methylenetetrahydrofolate (mTHF) as the methyl donor and reductant in the reaction, yielding dihydrofolate (DHF) as a by-product. This enzymatic reaction provides an intracellular de novo source of dTMP, an essential precursor for DNA biosynthesis. The sequence is that of Thymidylate synthase from Corynebacterium aurimucosum (strain ATCC 700975 / DSM 44827 / CIP 107346 / CN-1) (Corynebacterium nigricans).